The sequence spans 475 residues: Ribulose bisphosphate carboxylase large chain (475 aa).

Residues 1–2 (MS) constitute a propeptide that is removed on maturation. Pro-3 carries the N-acetylproline modification. At Lys-14 the chain carries N6,N6,N6-trimethyllysine. The substrate site is built by Asn-123 and Thr-173. Catalysis depends on Lys-175, which acts as the Proton acceptor. A substrate-binding site is contributed by Lys-177. Residues Lys-201, Asp-203, and Glu-204 each contribute to the Mg(2+) site. Residue Lys-201 is modified to N6-carboxylysine. The active-site Proton acceptor is the His-294. Residues Arg-295, His-327, and Ser-379 each coordinate substrate.

The protein belongs to the RuBisCO large chain family. Type I subfamily. Heterohexadecamer of 8 large chains and 8 small chains; disulfide-linked. The disulfide link is formed within the large subunit homodimers. The cofactor is Mg(2+). The disulfide bond which can form in the large chain dimeric partners within the hexadecamer appears to be associated with oxidative stress and protein turnover.

It is found in the plastid. The protein resides in the chloroplast. It carries out the reaction 2 (2R)-3-phosphoglycerate + 2 H(+) = D-ribulose 1,5-bisphosphate + CO2 + H2O. It catalyses the reaction D-ribulose 1,5-bisphosphate + O2 = 2-phosphoglycolate + (2R)-3-phosphoglycerate + 2 H(+). RuBisCO catalyzes two reactions: the carboxylation of D-ribulose 1,5-bisphosphate, the primary event in carbon dioxide fixation, as well as the oxidative fragmentation of the pentose substrate in the photorespiration process. Both reactions occur simultaneously and in competition at the same active site. This Atriplex rosea (Red orache) protein is Ribulose bisphosphate carboxylase large chain.